The following is a 495-amino-acid chain: ATP synthase subunit beta, chloroplastic (495 aa).

172–179 (GGAGVGKT) is a binding site for ATP.

The protein belongs to the ATPase alpha/beta chains family. As to quaternary structure, F-type ATPases have 2 components, CF(1) - the catalytic core - and CF(0) - the membrane proton channel. CF(1) has five subunits: alpha(3), beta(3), gamma(1), delta(1), epsilon(1). CF(0) has four main subunits: a(1), b(1), b'(1) and c(9-12).

The protein localises to the plastid. Its subcellular location is the chloroplast thylakoid membrane. The enzyme catalyses ATP + H2O + 4 H(+)(in) = ADP + phosphate + 5 H(+)(out). Produces ATP from ADP in the presence of a proton gradient across the membrane. The catalytic sites are hosted primarily by the beta subunits. The sequence is that of ATP synthase subunit beta, chloroplastic from Hyacinthus orientalis (Common hyacinth).